Here is a 316-residue protein sequence, read N- to C-terminus: MLP-like protein 34 (316 aa).

It belongs to the MLP family.

This chain is MLP-like protein 34 (MLP34), found in Arabidopsis thaliana (Mouse-ear cress).